Reading from the N-terminus, the 469-residue chain is RuvB-like helicase 2 (469 aa).

Position 73–80 (73–80) interacts with ATP; sequence GEPGTGKT.

Belongs to the RuvB family. In terms of assembly, forms homohexameric rings. May form a dodecamer with rvb1 made of two stacked hexameric rings. Component of the chromatin remodeling Ino80 complex. Component of the RNA polymerase II holoenzyme complex.

It localises to the nucleus. It catalyses the reaction ATP + H2O = ADP + phosphate + H(+). In terms of biological role, has double-stranded DNA-stimulated ATPase and ATP-dependent DNA helicase (5' to 3') activity suggesting a role in nuclear processes such as recombination and transcription. Proposed core component of the chromatin remodeling Ino80 complex which is involved in transcriptional regulation, DNA replication and probably DNA repair. This Dictyostelium discoideum (Social amoeba) protein is RuvB-like helicase 2 (rvb2).